The primary structure comprises 114 residues: Probable 4-amino-4-deoxy-L-arabinose-phosphoundecaprenol flippase subunit ArnE (114 aa).

3 consecutive transmembrane segments (helical) span residues 41 to 61, 64 to 84, and 91 to 111; these read MWLW…LLVL, MDVG…TLVG, and PVDP…FQLG.

The protein belongs to the ArnE family. As to quaternary structure, heterodimer of ArnE and ArnF.

It is found in the cell inner membrane. The protein operates within bacterial outer membrane biogenesis; lipopolysaccharide biosynthesis. Its function is as follows. Translocates 4-amino-4-deoxy-L-arabinose-phosphoundecaprenol (alpha-L-Ara4N-phosphoundecaprenol) from the cytoplasmic to the periplasmic side of the inner membrane. The polypeptide is Probable 4-amino-4-deoxy-L-arabinose-phosphoundecaprenol flippase subunit ArnE (Pseudomonas savastanoi pv. phaseolicola (strain 1448A / Race 6) (Pseudomonas syringae pv. phaseolicola (strain 1448A / Race 6))).